The following is an 887-amino-acid chain: Alanine--tRNA ligase (887 aa).

Positions 564, 568, 676, and 680 each coordinate Zn(2+).

Belongs to the class-II aminoacyl-tRNA synthetase family. The cofactor is Zn(2+).

The protein localises to the cytoplasm. It catalyses the reaction tRNA(Ala) + L-alanine + ATP = L-alanyl-tRNA(Ala) + AMP + diphosphate. In terms of biological role, catalyzes the attachment of alanine to tRNA(Ala) in a two-step reaction: alanine is first activated by ATP to form Ala-AMP and then transferred to the acceptor end of tRNA(Ala). Also edits incorrectly charged Ser-tRNA(Ala) and Gly-tRNA(Ala) via its editing domain. The chain is Alanine--tRNA ligase from Agrobacterium fabrum (strain C58 / ATCC 33970) (Agrobacterium tumefaciens (strain C58)).